Reading from the N-terminus, the 351-residue chain is Protein-glutamate methylesterase/protein-glutamine glutaminase 2 (351 aa).

A Response regulatory domain is found at 4–121 (KVLVVDDSAL…PQDFNEYQDL (118 aa)). Asp-55 bears the 4-aspartylphosphate mark. Positions 156–348 (RVINTQLVAI…DKMLNYLASL (193 aa)) constitute a CheB-type methylesterase domain. Active-site residues include Ser-168, His-194, and Asp-290.

It belongs to the CheB family. Post-translationally, phosphorylated by CheA. Phosphorylation of the N-terminal regulatory domain activates the methylesterase activity.

The protein localises to the cytoplasm. It catalyses the reaction [protein]-L-glutamate 5-O-methyl ester + H2O = L-glutamyl-[protein] + methanol + H(+). The enzyme catalyses L-glutaminyl-[protein] + H2O = L-glutamyl-[protein] + NH4(+). Its function is as follows. Involved in chemotaxis. Part of a chemotaxis signal transduction system that modulates chemotaxis in response to various stimuli. Catalyzes the demethylation of specific methylglutamate residues introduced into the chemoreceptors (methyl-accepting chemotaxis proteins or MCP) by CheR. Also mediates the irreversible deamidation of specific glutamine residues to glutamic acid. The sequence is that of Protein-glutamate methylesterase/protein-glutamine glutaminase 2 from Shewanella sp. (strain MR-4).